The primary structure comprises 104 residues: Large ribosomal subunit protein uL23 (104 aa).

Belongs to the universal ribosomal protein uL23 family. As to quaternary structure, part of the 50S ribosomal subunit. Contacts protein L29, and trigger factor when it is bound to the ribosome.

One of the early assembly proteins it binds 23S rRNA. One of the proteins that surrounds the polypeptide exit tunnel on the outside of the ribosome. Forms the main docking site for trigger factor binding to the ribosome. The chain is Large ribosomal subunit protein uL23 from Neisseria meningitidis serogroup B (strain ATCC BAA-335 / MC58).